Consider the following 301-residue polypeptide: Bifunctional protein FolD (301 aa).

NADP(+) is bound by residues 166 to 168 (GKS), S191, and I232.

It belongs to the tetrahydrofolate dehydrogenase/cyclohydrolase family. In terms of assembly, homodimer.

It carries out the reaction (6R)-5,10-methylene-5,6,7,8-tetrahydrofolate + NADP(+) = (6R)-5,10-methenyltetrahydrofolate + NADPH. The catalysed reaction is (6R)-5,10-methenyltetrahydrofolate + H2O = (6R)-10-formyltetrahydrofolate + H(+). It participates in one-carbon metabolism; tetrahydrofolate interconversion. Functionally, catalyzes the oxidation of 5,10-methylenetetrahydrofolate to 5,10-methenyltetrahydrofolate and then the hydrolysis of 5,10-methenyltetrahydrofolate to 10-formyltetrahydrofolate. The sequence is that of Bifunctional protein FolD from Orientia tsutsugamushi (strain Ikeda) (Rickettsia tsutsugamushi).